The primary structure comprises 292 residues: Acetylglutamate kinase (292 aa).

Residues 64-65 (GG), Arg-86, and Asn-190 each bind substrate.

It belongs to the acetylglutamate kinase family. ArgB subfamily.

It is found in the cytoplasm. The enzyme catalyses N-acetyl-L-glutamate + ATP = N-acetyl-L-glutamyl 5-phosphate + ADP. Its pathway is amino-acid biosynthesis; L-arginine biosynthesis; N(2)-acetyl-L-ornithine from L-glutamate: step 2/4. Catalyzes the ATP-dependent phosphorylation of N-acetyl-L-glutamate. The sequence is that of Acetylglutamate kinase from Geobacter sp. (strain M21).